A 78-amino-acid chain; its full sequence is Cytochrome c oxidase subunit 6b-2 (78 aa).

The region spanning 22-65 is the CHCH domain; the sequence is TRHCFTRYIEFHRCTTAKGEESNDCERFAKYYRALCPGEWVDKW. The Cx9C motif motif lies at 25 to 35; that stretch reads CFTRYIEFHRC. Cystine bridges form between cysteine 25-cysteine 57 and cysteine 35-cysteine 46. A Cx10C motif motif is present at residues 46–57; that stretch reads CERFAKYYRALC.

It belongs to the cytochrome c oxidase subunit 6B (TC 3.D.4.8) family. As to expression, specifically expressed in roots.

The protein localises to the mitochondrion. This protein is one of the nuclear-coded polypeptide chains of cytochrome c oxidase, the terminal oxidase in mitochondrial electron transport. This protein may be one of the heme-binding subunits of the oxidase. The protein is Cytochrome c oxidase subunit 6b-2 (COX6B-2) of Arabidopsis thaliana (Mouse-ear cress).